The sequence spans 323 residues: Lipoyl synthase (323 aa).

Residues Cys-65, Cys-70, Cys-76, Cys-91, Cys-95, Cys-98, and Ser-304 each coordinate [4Fe-4S] cluster. The Radical SAM core domain occupies 77 to 293 (FNNGTATFMI…KKEALSIGFT (217 aa)).

This sequence belongs to the radical SAM superfamily. Lipoyl synthase family. [4Fe-4S] cluster serves as cofactor.

It localises to the cytoplasm. The enzyme catalyses [[Fe-S] cluster scaffold protein carrying a second [4Fe-4S](2+) cluster] + N(6)-octanoyl-L-lysyl-[protein] + 2 oxidized [2Fe-2S]-[ferredoxin] + 2 S-adenosyl-L-methionine + 4 H(+) = [[Fe-S] cluster scaffold protein] + N(6)-[(R)-dihydrolipoyl]-L-lysyl-[protein] + 4 Fe(3+) + 2 hydrogen sulfide + 2 5'-deoxyadenosine + 2 L-methionine + 2 reduced [2Fe-2S]-[ferredoxin]. The protein operates within protein modification; protein lipoylation via endogenous pathway; protein N(6)-(lipoyl)lysine from octanoyl-[acyl-carrier-protein]: step 2/2. In terms of biological role, catalyzes the radical-mediated insertion of two sulfur atoms into the C-6 and C-8 positions of the octanoyl moiety bound to the lipoyl domains of lipoate-dependent enzymes, thereby converting the octanoylated domains into lipoylated derivatives. This is Lipoyl synthase from Buchnera aphidicola subsp. Acyrthosiphon pisum (strain 5A).